A 953-amino-acid chain; its full sequence is Coatomer subunit beta (953 aa).

Thr2 is modified (N-acetylthreonine). 6 HEAT repeats span residues 96–131 (HEMILVCDAYRKDLQHPNEFIRGSTLRFLCKLKEAE), 132–168 (LLEPLMPAIRACLEHRHSYVRRNAVLAIYTIYRNFEH), 240–276 (SERARFIRCIYNLLQSSSPAVKYEAAGTLVTLSSAPT), 277–314 (AIKAAAQCYIDLIIKESDNNVKLIVLDRLVELKEHPAH), 316–353 (RVLQDLVMDILRVLSTPDLEVRKKTLQLALDLVSSRNV), and 396–433 (DMAANVIPVLMEFLSDSNEAAAADVLEFVREAIQRFDN). An N6-acetyllysine modification is found at Lys494.

As to quaternary structure, oligomeric complex that consists of at least the alpha, beta, beta', gamma, delta, epsilon and zeta subunits. Interacts with CAPN8. Interacts with SCYL1 and PRKCE. Interacts with COPG1. Interacts with ARF1 (myristoylated); this interaction is required for binding of COPB1 to Golgi membranes. Interacts (via trunk domain) with ARF1 (via switch I region); the interaction is direct. Interacts with KCNK2 (via N-terminus); this interaction increases the channel-mediated whole cell currents and promotes plasma membrane expression of KCNK2. Interacts with STX17. Interacts with TMEM115. Interacts with TMEM41B. Post-translationally, proteolytically cleaved between Ser-528 and Ser-529 by CAPN8. In terms of tissue distribution, predominantly expressed in the upper one-third of the oxyntic mucosa and in most regions of the pyloric mucosa. Ubiquitously expressed including platelet, liver, heart, spleen, lung and kidney.

It localises to the cytoplasm. The protein localises to the golgi apparatus membrane. Its subcellular location is the cytoplasmic vesicle. The protein resides in the COPI-coated vesicle membrane. It is found in the cell membrane. It localises to the endoplasmic reticulum-Golgi intermediate compartment. Functionally, the coatomer is a cytosolic protein complex that binds to dilysine motifs and reversibly associates with Golgi non-clathrin-coated vesicles, which further mediate biosynthetic protein transport from the ER, via the Golgi up to the trans Golgi network. Coatomer complex is required for budding from Golgi membranes, and is essential for the retrograde Golgi-to-ER transport of dilysine-tagged proteins. In mammals, the coatomer can only be recruited by membranes associated to ADP-ribosylation factors (ARFs), which are small GTP-binding proteins; the complex also influences the Golgi structural integrity, as well as the processing, activity, and endocytic recycling of LDL receptors. Involved in the Golgi disassembly and reassembly processes during cell cycle. Involved in autophagy by playing a role in early endosome function. Plays a role in organellar compartmentalization of secretory compartments including endoplasmic reticulum (ER)-Golgi intermediate compartment (ERGIC), Golgi, trans-Golgi network (TGN) and recycling endosomes, and in biosynthetic transport of CAV1. Plays a functional role in facilitating the transport of kappa-type opioid receptor mRNAs into axons and enhances translation of these proteins in cortical neurons. Required for limiting lipid storage in lipid droplets. Involved in lipid homeostasis by regulating the presence of perilipin family members PLIN2 and PLIN3 at the lipid droplet surface and promoting the association of adipocyte triglyceride lipase (PNPLA2) with the lipid droplet surface to mediate lipolysis. This is Coatomer subunit beta (Copb1) from Mus musculus (Mouse).